The following is a 415-amino-acid chain: Fructose-1,6-bisphosphatase, chloroplastic (415 aa).

Residues 1–57 constitute a chloroplast transit peptide; the sequence is MASIGPATTTAVKLRSSIFNPQSSTLSPSQQCITFTKSLHSFPTATRHNVASGVRCM. Mg(2+)-binding residues include glutamate 135, glutamate 164, aspartate 185, leucine 187, and aspartate 188. Residue 188–191 participates in substrate binding; the sequence is DGSS. The tract at residues 207–232 is involved in light regulation; it reads SPNDECIVDSDHDDESQLSAEEQRCV. Cysteine 231 and cysteine 236 form a disulfide bridge. Substrate-binding residues include asparagine 295, tyrosine 327, tyrosine 345, tyrosine 347, and lysine 357. Mg(2+) is bound at residue glutamate 363.

It belongs to the FBPase class 1 family. In terms of assembly, homotetramer. The cofactor is Mg(2+).

It localises to the plastid. The protein resides in the chloroplast. It carries out the reaction beta-D-fructose 1,6-bisphosphate + H2O = beta-D-fructose 6-phosphate + phosphate. Its pathway is carbohydrate biosynthesis; Calvin cycle. This Spinacia oleracea (Spinach) protein is Fructose-1,6-bisphosphatase, chloroplastic.